Here is a 604-residue protein sequence, read N- to C-terminus: Elongation factor 4 (604 aa).

Positions 8-190 (KNKRNFSIIA…AIVHRIPAPN (183 aa)) constitute a tr-type G domain. GTP contacts are provided by residues 20 to 25 (DHGKST) and 137 to 140 (NKID).

It belongs to the TRAFAC class translation factor GTPase superfamily. Classic translation factor GTPase family. LepA subfamily.

The protein localises to the cell inner membrane. The catalysed reaction is GTP + H2O = GDP + phosphate + H(+). Required for accurate and efficient protein synthesis under certain stress conditions. May act as a fidelity factor of the translation reaction, by catalyzing a one-codon backward translocation of tRNAs on improperly translocated ribosomes. Back-translocation proceeds from a post-translocation (POST) complex to a pre-translocation (PRE) complex, thus giving elongation factor G a second chance to translocate the tRNAs correctly. Binds to ribosomes in a GTP-dependent manner. The protein is Elongation factor 4 of Fusobacterium nucleatum subsp. nucleatum (strain ATCC 25586 / DSM 15643 / BCRC 10681 / CIP 101130 / JCM 8532 / KCTC 2640 / LMG 13131 / VPI 4355).